A 118-amino-acid chain; its full sequence is Large ribosomal subunit protein uL18 (118 aa).

Belongs to the universal ribosomal protein uL18 family. In terms of assembly, part of the 50S ribosomal subunit; part of the 5S rRNA/L5/L18/L25 subcomplex. Contacts the 5S and 23S rRNAs.

In terms of biological role, this is one of the proteins that bind and probably mediate the attachment of the 5S RNA into the large ribosomal subunit, where it forms part of the central protuberance. The protein is Large ribosomal subunit protein uL18 of Nitrosospira multiformis (strain ATCC 25196 / NCIMB 11849 / C 71).